Here is a 672-residue protein sequence, read N- to C-terminus: GPI mannosyltransferase pigv-1 (672 aa).

Residues 1-134 (MRRREPGRDV…TQRCLGFCFR (134 aa)) are Cytoplasmic-facing. Over residues 82–94 (REESDSSSSREDS) the composition is skewed to basic and acidic residues. Positions 82–115 (REESDSSSSREDSPLGSTETGESCSTTDDEESKE) are disordered. The span at 97-107 (GSTETGESCST) shows a compositional bias: low complexity. A helical membrane pass occupies residues 135–155 (QLFFSRMWVFILQFIASYYAG). Over 156–239 (DRFRTDGFNL…NGMESVFGWT (84 aa)) the chain is Extracellular. A helical membrane pass occupies residues 240 to 260 (FPPWVTITLAAVFVNLFCFLL). Topologically, residues 261–277 (CGMTLYQVVLIMTRSVK) are cytoplasmic. Helical transmembrane passes span 278–298 (ISLL…FSSA) and 299–319 (YSES…LFGL). The Extracellular segment spans residues 320-345 (RGKGFWHRMLKGFTGTICFGLTFAVR). A helical transmembrane segment spans residues 346–366 (SNGLLNFLYVAWIWCGTLLWD). Residues 367–423 (EEMPIPDCHKLISTLAATKNERYKQEWQAKFWRFQQKRKQNRKVFRWTDPNFSRCVT) lie on the Cytoplasmic side of the membrane. Residues 424–444 (LFIVIVCAISATLLFFTPYVF) form a helical membrane-spanning segment. Topologically, residues 445-520 (MTNFTADEFC…WSVKFFGYWK (76 aa)) are extracellular. A helical transmembrane segment spans residues 521-541 (IKKIPCFLMMLPAAILTVLAI). Residues 542 to 569 (KSSWNDVFLNKRWNNIWVLTARSDHSLP) are Cytoplasmic-facing. The helical transmembrane segment at 570–590 (MAIHSSVLLFVAIFYINSEVF) threads the bilayer. At 591–592 (TR) the chain is on the extracellular side. A helical transmembrane segment spans residues 593–613 (IIFSSSPFIYIYIATYIDKLT). Residues 614-648 (QGTIAGNRLWQYFESPGILPFFVFRRVWQDGWRGK) are Cytoplasmic-facing. A helical membrane pass occupies residues 649–669 (LLYIYILGYFVFGTMAHSAWL). Residues 670–672 (PFT) lie on the Extracellular side of the membrane.

It belongs to the PIGV family. Expressed in epithelial tissues including the epidermis, pharynx, intestine, rectum and excretory cell during embryogenesis.

It is found in the endoplasmic reticulum membrane. The protein operates within glycolipid biosynthesis; glycosylphosphatidylinositol-anchor biosynthesis. Its function is as follows. Alpha-1,6-mannosyltransferase involved in glycosylphosphatidylinositol-anchor biosynthesis. Transfers the second mannose to the glycosylphosphatidylinositol during GPI precursor assembly. Required for maintenance of epithelial integrity during embryogenesis. In Caenorhabditis elegans, this protein is GPI mannosyltransferase pigv-1.